The following is a 127-amino-acid chain: Aspartate 1-decarboxylase (127 aa).

The active-site Schiff-base intermediate with substrate; via pyruvic acid is Ser25. Pyruvic acid (Ser) is present on Ser25. Residue Thr57 coordinates substrate. Tyr58 (proton donor) is an active-site residue. Substrate is bound at residue 73–75 (GAA).

It belongs to the PanD family. In terms of assembly, heterooctamer of four alpha and four beta subunits. It depends on pyruvate as a cofactor. Is synthesized initially as an inactive proenzyme, which is activated by self-cleavage at a specific serine bond to produce a beta-subunit with a hydroxyl group at its C-terminus and an alpha-subunit with a pyruvoyl group at its N-terminus.

It is found in the cytoplasm. It catalyses the reaction L-aspartate + H(+) = beta-alanine + CO2. Its pathway is cofactor biosynthesis; (R)-pantothenate biosynthesis; beta-alanine from L-aspartate: step 1/1. Catalyzes the pyruvoyl-dependent decarboxylation of aspartate to produce beta-alanine. This chain is Aspartate 1-decarboxylase, found in Desulfitobacterium hafniense (strain DSM 10664 / DCB-2).